A 1499-amino-acid chain; its full sequence is DENN domain-containing protein 4B (1499 aa).

Residues 26–45 (PEEKWVPEPTGPLRPPRPAE) form a disordered region. Pro residues predominate over residues 34-44 (PTGPLRPPRPA). An MABP domain is found at 44–203 (AEPITDVAVI…AVYLCYKVGL (160 aa)). A uDENN domain is found at 195-369 (VYLCYKVGLA…NVPFPSPQRP (175 aa)). One can recognise a cDENN domain in the interval 390-526 (PLPLSGASFL…PYKLLLATLT (137 aa)). A dDENN domain is found at 528-644 (LYQQLDQTYT…ECSFGSARHA (117 aa)). Residues 717–744 (PQEQQGALPVPGPSRSAPSSPAPRRTKQ) are disordered. Residues 729 to 739 (PSRSAPSSPAP) are compositionally biased toward low complexity. PPR repeat units lie at residues 775–811 (WFLC…VVLP) and 812–846 (DEVC…GIVP). Disordered stretches follow at residues 890–968 (PLKD…ARGT), 988–1115 (PRGS…SLGS), and 1204–1226 (RPSA…APAP). Positions 897–915 (QQQQQQQQQQQKQQVAEQQ) are enriched in low complexity. Polar residues predominate over residues 933 to 942 (RPLQRQTTWA). S951 bears the Phosphoserine mark. Residues 1074 to 1083 (IPPPELPSDL) show a composition bias toward pro residues. Residue S1090 is modified to Phosphoserine. Residues 1103-1115 (GSTASESSASLGS) show a composition bias toward low complexity.

It is found in the golgi apparatus. In terms of biological role, guanine nucleotide exchange factor (GEF) which may activate RAB10. Promotes the exchange of GDP to GTP, converting inactive GDP-bound Rab proteins into their active GTP-bound form. The protein is DENN domain-containing protein 4B (Dennd4b) of Mus musculus (Mouse).